Reading from the N-terminus, the 516-residue chain is Cysteine--tRNA ligase (516 aa).

Cys-34 is a Zn(2+) binding site. Positions 36–46 (PTVYNFAHLGN) match the 'HIGH' region motif. The Zn(2+) site is built by Cys-225, His-250, and Glu-254. The 'KMSKS' region motif lies at 285-289 (KMSKS). Lys-288 is an ATP binding site.

The protein belongs to the class-I aminoacyl-tRNA synthetase family. As to quaternary structure, monomer. Zn(2+) is required as a cofactor.

The protein resides in the cytoplasm. The enzyme catalyses tRNA(Cys) + L-cysteine + ATP = L-cysteinyl-tRNA(Cys) + AMP + diphosphate. The polypeptide is Cysteine--tRNA ligase (Zymomonas mobilis subsp. mobilis (strain ATCC 31821 / ZM4 / CP4)).